A 102-amino-acid chain; its full sequence is UPF0751 protein Dhaf_1351 (102 aa).

This sequence belongs to the UPF0751 family.

The polypeptide is UPF0751 protein Dhaf_1351 (Desulfitobacterium hafniense (strain DSM 10664 / DCB-2)).